We begin with the raw amino-acid sequence, 351 residues long: Photosystem II D2 protein (351 aa).

Residues 39 to 59 form a helical membrane-spanning segment; that stretch reads TAYLSIGGWLTGTTFVTSWYT. A chlorophyll a-binding site is contributed by His-116. A helical transmembrane segment spans residues 123 to 139; that stretch reads GFMLRQFEIARLVGIRP. Residues Gln-128 and Asn-141 each coordinate pheophytin a. Residues 151-164 traverse the membrane as a helical segment; it reads VFVSVFLMYPLGQS. His-196 is a binding site for chlorophyll a. The chain crosses the membrane as a helical span at residues 206 to 226; the sequence is GALLCAIHGATVENTLFEDGE. A plastoquinone contacts are provided by His-213 and Phe-260. His-213 lines the Fe cation pocket. His-267 provides a ligand contact to Fe cation. The helical transmembrane segment at 277–293 threads the bilayer; the sequence is GLWTSAIGIIGLALNLR.

It belongs to the reaction center PufL/M/PsbA/D family. As to quaternary structure, PSII is composed of 1 copy each of membrane proteins PsbA, PsbB, PsbC, PsbD, PsbE, PsbF, PsbH, PsbI, PsbJ, PsbK, PsbL, PsbM, PsbT, PsbX, PsbY, PsbZ, Psb30/Ycf12, peripheral proteins PsbO, CyanoQ (PsbQ), PsbU, PsbV and a large number of cofactors. It forms dimeric complexes. It depends on The D1/D2 heterodimer binds P680, chlorophylls that are the primary electron donor of PSII, and subsequent electron acceptors. It shares a non-heme iron and each subunit binds pheophytin, quinone, additional chlorophylls, carotenoids and lipids. There is also a Cl(-1) ion associated with D1 and D2, which is required for oxygen evolution. The PSII complex binds additional chlorophylls, carotenoids and specific lipids. as a cofactor.

It localises to the cellular thylakoid membrane. The enzyme catalyses 2 a plastoquinone + 4 hnu + 2 H2O = 2 a plastoquinol + O2. In terms of biological role, photosystem II (PSII) is a light-driven water:plastoquinone oxidoreductase that uses light energy to abstract electrons from H(2)O, generating O(2) and a proton gradient subsequently used for ATP formation. It consists of a core antenna complex that captures photons, and an electron transfer chain that converts photonic excitation into a charge separation. The D1/D2 (PsbA/PsbD) reaction center heterodimer binds P680, the primary electron donor of PSII as well as several subsequent electron acceptors. D2 is needed for assembly of a stable PSII complex. The protein is Photosystem II D2 protein of Synechococcus sp. (strain CC9311).